An 810-amino-acid polypeptide reads, in one-letter code: Plasminogen (810 aa).

Positions 1-19 (MEHKEVVLLLLLFLKSGQG) are cleaved as a signal peptide. The region spanning 20–98 (EPLDDYVNTQ…RDVVLFEKKV (79 aa)) is the PAN domain. Cystine bridges form between C49–C73, C53–C61, C103–C181, C124–C164, C152–C176, C185–C262, C188–C316, C206–C245, C234–C257, C275–C352, C296–C335, and C324–C347. 2 Kringle domains span residues 103-181 (CKTG…ILEC) and 184-262 (ECMH…IPRC). Residues 126-145 (KWSSTSPHRPRFSPATHPSE) form a disordered region. R136, D158, and R172 together coordinate L-lysine. An O-linked (GalNAc...) serine glycan is attached at S268. Positions 275–352 (CLKGTGENYR…RWEYCKIPSC (78 aa)) constitute a Kringle 3 domain. The N-linked (GlcNAc...) asparagine glycan is linked to N308. O-linked (GalNAc...) threonine glycosylation is present at T365. 9 disulfide bridges follow: C377-C454, C398-C437, C426-C449, C481-C560, C502-C543, C531-C555, C567-C685, C577-C585, and C607-C623. Kringle domains follow at residues 377 to 454 (CYHG…LKKC) and 481 to 560 (CMFG…VPQC). The segment at 396 to 416 (KKCQSWSSMTPHRHQKTPENY) is disordered. L-lysine-binding residues include D432 and R445. One can recognise a Peptidase S1 domain in the interval 581 to 808 (VVGGCVAHPH…FVTWIEGVMR (228 aa)). S597 is modified (phosphoserine). Residues H622 and D665 each act as charge relay system in the active site. A Phosphoserine modification is found at S688. Disulfide bonds link C699–C766, C729–C745, and C756–C784. S760 functions as the Charge relay system in the catalytic mechanism.

This sequence belongs to the peptidase S1 family. Plasminogen subfamily. As to quaternary structure, interacts (both mature PLG and the angiostatin peptide) with CSPG4 and AMOT. Interacts (via the Kringle domains) with HRG; the interaction tethers PLG to the cell surface and enhances its activation. Interacts (via Kringle 4 domain) with ADA; the interaction stimulates PLG activation when in complex with DPP4. Angiostatin: Interacts with ATP5F1A; the interaction inhibits most of the angiogenic effects of angiostatin. Interacts (plasmin) with iripin-8, a serine protease inhibitor from Ixodes ricinus saliva. Interacts (plasmin) with iripin-1, a serine protease inhibitor from Ixodes ricinus saliva. Interacts (plasmin) with Kazal-type trypsin inhibitor, a serine protease inhibitor from Aedes aegypti. In terms of assembly, (Microbial infection) Interacts with C.albicans GPD2; the interaction is direct and provides active plasmin on the surface of fungal cells. (Microbial infection) Interacts with Staphylococcus aureus protein FnbB; this interaction provides active plasmin on the surface of bacterial cells. As to quaternary structure, (Microbial infection) Interacts with P.falciparum (strain NF54) enolase ENO (via DKSLVK motif); the interaction occurs at the ookinete cell surface and is required for ookinete invasion of the mosquito midgut. In terms of assembly, (Microbial infection) Interacts with B.burgdorferi OspC. In terms of processing, N-linked glycan contains N-acetyllactosamine and sialic acid. O-linked glycans consist of Gal-GalNAc disaccharide modified with up to 2 sialic acid residues (microheterogeneity). Post-translationally, in the presence of the inhibitor, the activation involves only cleavage after Arg-580, yielding two chains held together by two disulfide bonds. In the absence of the inhibitor, the activation involves additionally the removal of the activation peptide. (Microbial infection) The Y.pestis Pla protein cleaves between Arg-580 and Val-581, generating plasmin which facilitates bacterial migration and infection. Present in plasma and many other extracellular fluids. It is synthesized in the liver.

It localises to the secreted. It catalyses the reaction Preferential cleavage: Lys-|-Xaa &gt; Arg-|-Xaa, higher selectivity than trypsin. Converts fibrin into soluble products.. With respect to regulation, converted into plasmin by plasminogen activators, both plasminogen and its activator being bound to fibrin. Activated with catalytic amounts of streptokinase. Plasmin activity inhibited by SERPINE2. In terms of biological role, plasmin dissolves the fibrin of blood clots and acts as a proteolytic factor in a variety of other processes including embryonic development, tissue remodeling, tumor invasion, and inflammation. In ovulation, weakens the walls of the Graafian follicle. It activates the urokinase-type plasminogen activator, collagenases and several complement zymogens, such as C1, C4 and C5. Cleavage of fibronectin and laminin leads to cell detachment and apoptosis. Also cleaves fibrin, thrombospondin and von Willebrand factor. Its role in tissue remodeling and tumor invasion may be modulated by CSPG4. Binds to cells. Its function is as follows. Angiostatin is an angiogenesis inhibitor that blocks neovascularization and growth of experimental primary and metastatic tumors in vivo. (Microbial infection) ENO/enoloase from parasite P.falciparum (strain NF54) interacts with PLG present in the mosquito blood meal to promote the invasion of the mosquito midgut by the parasite ookinete. The catalytic active form, plasmin, is essential for the invasion of the mosquito midgut. Functionally, (Microbial infection) Binds to OspC on the surface of B.burgdorferi cells, possibly conferring an extracellular protease activity on the bacteria that allows it to traverse host tissue. In terms of biological role, (Microbial infection) Interacts with dengue virus type 2 particles. Enhances dengue virus type 2 infection in Aedes aegypti mosquito midgut by increasing midgut internalization, resulting in higher infection rates and viral dissemination in mosquitoes. In Homo sapiens (Human), this protein is Plasminogen (PLG).